The chain runs to 584 residues: Transcriptional regulator STP2 (584 aa).

2 stretches are compositionally biased toward polar residues: residues 1 to 11 (MSVAITSNNNK) and 180 to 202 (AESNESNESLAKDSSTTPASISD). Disordered stretches follow at residues 1 to 22 (MSVAITSNNNKQPQPQPQPHLK) and 161 to 214 (KMHP…STVS). Residues 203-214 (SPSHSETESTVS) show a composition bias toward low complexity. The segment at 225 to 247 (FKCPSCDAEFRVRGYLTRHMKKH) adopts a C2H2-type zinc-finger fold. 2 disordered regions span residues 381–496 (RQKK…PQQP) and 553–584 (QYQPGQQQQQQQQQQQQQQQRQHQQQQPSMYF). Residues 394–407 (SESSIQSQESESSI) show a composition bias toward low complexity. Residues 431–441 (QHQHQHHHHVQ) show a composition bias toward basic residues. Residues 442 to 480 (NQHQQHVNQQQSIATPASIYSSSASSTSSYESTHSPYTP) show a composition bias toward low complexity. Residues 481 to 496 (QSSRSPLSHMYNPQQP) show a composition bias toward polar residues.

In terms of processing, proteolytically cleaved: activated by the amino acid-induced proteolytic removal of an N-terminal inhibitory domain.

The protein resides in the cell membrane. Its subcellular location is the nucleus. Its function is as follows. Transcription factor involved in the regulation of gene expression in response to extracellular amino acid levels. Synthesized as latent cytoplasmic precursor, which, upon a signal initiated by the plasma membrane SPS amino acid sensor system (including CSY1 and CSH3), becomes proteolytically activated and relocates to the nucleus, where it induces the expression of SPS-sensor-regulated genes. Required for efficient alkalinization through the release of ammonia from the cells produced during the breakdown of amino acids, and subsequent switch to the hyphal form. In Candida albicans (strain SC5314 / ATCC MYA-2876) (Yeast), this protein is Transcriptional regulator STP2 (STP2).